The following is a 735-amino-acid chain: FHF complex subunit HOOK-interacting protein 2B (735 aa).

A disordered region spans residues 183-229; the sequence is SSSTSDEAAEKDCSGSSSPERASSPSSSSSACSLLSRSGAHPVSSPQ. Positions 196–221 are enriched in low complexity; sequence SGSSSPERASSPSSSSSACSLLSRSG.

It belongs to the FHIP family.

The protein is FHF complex subunit HOOK-interacting protein 2B (fhip2b) of Danio rerio (Zebrafish).